The chain runs to 141 residues: Hemoglobin subunit alpha (141 aa).

The region spanning 1 to 141 (VLSADDKANV…VSTVLTSKYR (141 aa)) is the Globin domain. A Phosphoserine modification is found at serine 3. N6-succinyllysine is present on residues lysine 7 and lysine 11. At lysine 16 the chain carries N6-acetyllysine; alternate. Lysine 16 is modified (N6-succinyllysine; alternate). At tyrosine 24 the chain carries Phosphotyrosine. Serine 35 bears the Phosphoserine mark. Lysine 40 carries the post-translational modification N6-succinyllysine. Serine 49 bears the Phosphoserine mark. Histidine 58 provides a ligand contact to O2. Histidine 87 is a heme b binding site. Serine 102 is modified (phosphoserine). Threonine 108 carries the post-translational modification Phosphothreonine. 2 positions are modified to phosphoserine: serine 124 and serine 131. Threonine 134 and threonine 137 each carry phosphothreonine. Serine 138 bears the Phosphoserine mark.

It belongs to the globin family. As to quaternary structure, heterotetramer of two alpha chains and two beta chains. As to expression, red blood cells.

Functionally, involved in oxygen transport from the lung to the various peripheral tissues. The chain is Hemoglobin subunit alpha from Peromyscus californicus (California mouse).